Here is a 425-residue protein sequence, read N- to C-terminus: Serine hydroxymethyltransferase (425 aa).

Residues L122 and 126-128 (GHL) contribute to the (6S)-5,6,7,8-tetrahydrofolate site. K231 carries the post-translational modification N6-(pyridoxal phosphate)lysine. (6S)-5,6,7,8-tetrahydrofolate is bound at residue 355–357 (SPF).

It belongs to the SHMT family. In terms of assembly, homodimer. Requires pyridoxal 5'-phosphate as cofactor.

Its subcellular location is the cytoplasm. It carries out the reaction (6R)-5,10-methylene-5,6,7,8-tetrahydrofolate + glycine + H2O = (6S)-5,6,7,8-tetrahydrofolate + L-serine. It functions in the pathway one-carbon metabolism; tetrahydrofolate interconversion. The protein operates within amino-acid biosynthesis; glycine biosynthesis; glycine from L-serine: step 1/1. Catalyzes the reversible interconversion of serine and glycine with tetrahydrofolate (THF) serving as the one-carbon carrier. This reaction serves as the major source of one-carbon groups required for the biosynthesis of purines, thymidylate, methionine, and other important biomolecules. Also exhibits THF-independent aldolase activity toward beta-hydroxyamino acids, producing glycine and aldehydes, via a retro-aldol mechanism. This is Serine hydroxymethyltransferase from Rippkaea orientalis (strain PCC 8801 / RF-1) (Cyanothece sp. (strain PCC 8801)).